Reading from the N-terminus, the 556-residue chain is 2-succinyl-5-enolpyruvyl-6-hydroxy-3-cyclohexene-1-carboxylate synthase (556 aa).

The protein belongs to the TPP enzyme family. MenD subfamily. As to quaternary structure, homodimer. The cofactor is Mg(2+). It depends on Mn(2+) as a cofactor. Thiamine diphosphate serves as cofactor.

The catalysed reaction is isochorismate + 2-oxoglutarate + H(+) = 5-enolpyruvoyl-6-hydroxy-2-succinyl-cyclohex-3-ene-1-carboxylate + CO2. It participates in quinol/quinone metabolism; 1,4-dihydroxy-2-naphthoate biosynthesis; 1,4-dihydroxy-2-naphthoate from chorismate: step 2/7. Its pathway is quinol/quinone metabolism; menaquinone biosynthesis. Catalyzes the thiamine diphosphate-dependent decarboxylation of 2-oxoglutarate and the subsequent addition of the resulting succinic semialdehyde-thiamine pyrophosphate anion to isochorismate to yield 2-succinyl-5-enolpyruvyl-6-hydroxy-3-cyclohexene-1-carboxylate (SEPHCHC). This is 2-succinyl-5-enolpyruvyl-6-hydroxy-3-cyclohexene-1-carboxylate synthase from Escherichia coli O127:H6 (strain E2348/69 / EPEC).